The primary structure comprises 434 residues: Trigger factor (434 aa).

Residues 160–245 (GDKVKMNFVG…LTEVQAANLP (86 aa)) form the PPIase FKBP-type domain.

The protein belongs to the FKBP-type PPIase family. Tig subfamily.

Its subcellular location is the cytoplasm. The catalysed reaction is [protein]-peptidylproline (omega=180) = [protein]-peptidylproline (omega=0). Functionally, involved in protein export. Acts as a chaperone by maintaining the newly synthesized protein in an open conformation. Functions as a peptidyl-prolyl cis-trans isomerase. The polypeptide is Trigger factor (Shewanella baltica (strain OS185)).